Reading from the N-terminus, the 386-residue chain is Pepsin A (386 aa).

An N-terminal signal peptide occupies residues 1–15; it reads MKWLLLISLVALSEC. Residues 16–60 constitute a propeptide, activation peptide; that stretch reads AIVKVPLVRKKSLRQNLIEHGLLNDFLKNQSPNPASKYFPQEPTV. The Peptidase A1 domain occupies 74 to 383; the sequence is YFGTIGIGTP…DRANNQVGLA (310 aa). The active site involves Asp-92. 2 disulfides stabilise this stretch: Cys-105-Cys-110 and Cys-266-Cys-270. Asp-275 is an active-site residue. An intrachain disulfide couples Cys-309 to Cys-342.

This sequence belongs to the peptidase A1 family.

It localises to the secreted. It catalyses the reaction Preferential cleavage: hydrophobic, preferably aromatic, residues in P1 and P1' positions. Cleaves 1-Phe-|-Val-2, 4-Gln-|-His-5, 13-Glu-|-Ala-14, 14-Ala-|-Leu-15, 15-Leu-|-Tyr-16, 16-Tyr-|-Leu-17, 23-Gly-|-Phe-24, 24-Phe-|-Phe-25 and 25-Phe-|-Tyr-26 bonds in the B chain of insulin.. Its function is as follows. Shows particularly broad specificity; although bonds involving phenylalanine and leucine are preferred, many others are also cleaved to some extent. In Canis lupus familiaris (Dog), this protein is Pepsin A (PGA).